The following is a 303-amino-acid chain: Glutaminase (303 aa).

Residues serine 61, asparagine 111, glutamate 155, asparagine 162, tyrosine 186, tyrosine 238, and valine 256 each coordinate substrate.

It belongs to the glutaminase family. Homotetramer.

The catalysed reaction is L-glutamine + H2O = L-glutamate + NH4(+). The chain is Glutaminase from Marinomonas sp. (strain MWYL1).